Here is a 1041-residue protein sequence, read N- to C-terminus: Histone deacetylase complex subunit SAP130-B (1041 aa).

5 disordered regions span residues 1–62 (MSSQ…QEPV), 111–131 (KSTM…SAVP), 572–592 (TNQG…EPKS), 614–769 (TPAG…PSGA), and 806–852 (VLAN…DEER). Positions 18-30 (VSNSGASVGQNVQ) are enriched in polar residues. Residues 33 to 42 (EVAREIDVQS) are compositionally biased toward basic and acidic residues. Residues 576 to 592 (VQTSSVSSQQASSEPKS) are compositionally biased toward low complexity. Residues 614 to 641 (TPAGTTVMQSHSQSPGIGSSPAQGSSPR) show a composition bias toward polar residues. Residues 707–728 (PGAADQPSAAASLPSSHHPTAA) show a composition bias toward low complexity.

It belongs to the SAP130 family.

The protein localises to the nucleus. Its function is as follows. Acts as a transcriptional repressor. This chain is Histone deacetylase complex subunit SAP130-B (sap130-b), found in Xenopus laevis (African clawed frog).